We begin with the raw amino-acid sequence, 267 residues long: Nus factor SuhB (267 aa).

Mg(2+) is bound by residues glutamate 67, aspartate 84, and leucine 86. Residue glutamate 67 participates in substrate binding. Residues 86–89 (LDGT), arginine 183, and aspartate 212 contribute to the substrate site.

It belongs to the inositol monophosphatase superfamily. Homodimer. The rRNA transcription and antitermination complex (rrnTAC) consists of RNA polymerase (RNAP), NusA, NusB, NusE (rpsJ), NusG, SubB, ribosomal protein S4, DNA and precursor rRNA; S4 is more flexible than other subunits. The cofactor is Mg(2+).

The protein localises to the cytoplasm. The catalysed reaction is a myo-inositol phosphate + H2O = myo-inositol + phosphate. In terms of biological role, part of the processive rRNA transcription and antitermination complex (rrnTAC). The complex forms an RNA-chaperone ring around the RNA exit tunnel of RNA polymerase (RNAP). It supports rapid transcription and antitermination of rRNA operons, cotranscriptional rRNA folding, and annealing of distal rRNA regions to allow correct ribosome biogenesis. This subunit may play a central role in organizing the structure. The protein is Nus factor SuhB of Vibrio cholerae serotype O1 (strain ATCC 39315 / El Tor Inaba N16961).